Here is a 572-residue protein sequence, read N- to C-terminus: Arginine--tRNA ligase (572 aa).

The 'HIGH' region motif lies at 121–131 (PNLAKEMHVGH).

It belongs to the class-I aminoacyl-tRNA synthetase family. As to quaternary structure, monomer.

It is found in the cytoplasm. It carries out the reaction tRNA(Arg) + L-arginine + ATP = L-arginyl-tRNA(Arg) + AMP + diphosphate. The protein is Arginine--tRNA ligase of Chromobacterium violaceum (strain ATCC 12472 / DSM 30191 / JCM 1249 / CCUG 213 / NBRC 12614 / NCIMB 9131 / NCTC 9757 / MK).